The sequence spans 76 residues: U1-cyrtautoxin-As1d (76 aa).

4 cysteine pairs are disulfide-bonded: cysteine 23–cysteine 37, cysteine 30–cysteine 51, cysteine 36–cysteine 66, and cysteine 69–cysteine 76.

It belongs to the neurotoxin 21 family. In terms of tissue distribution, expressed by the venom gland.

The protein localises to the secreted. Functionally, neurotoxin with probable ion channel impairing activity. In vivo, is both paralytic and lethal, when injected into lepidopteran larvae. This Apomastus schlingeri (Trap-door spider) protein is U1-cyrtautoxin-As1d.